A 962-amino-acid chain; its full sequence is MACRRRYLSSLETGSSLSTDRYSVEGEAPSSETGTSLDSPSAYHQGPLVPGSSLSPDHYEHTSVGAYGLYAGPGPQQRTRRPRLQHSTSVLRKQAEEEAIKRSRSLSESYELSSDLQDKQVEMLERKYGGRLVTRHAARTIQTAFRQYQMNKNFERLRSSMSENRMSRRIVLSNMRMQFSFEGPEKVHSSYFEGKQVSVTNDGSQLGALVPSECGDLSDPALKSPAPSSDFADAITELEDAFSRQVKSLAESIDDALNCRSLHSEEVPASDTARARDTEPKPGLHGMDHRKLDEMTASYSDVTLYIDEEELSPPLPLSQAGDRPSSTESDLRLRSGGAAQDYWALAHKEDKADTDTSCRSTPSLERPEPRLRVEHLPLLTIEPPSDSSVELSDRSDRSSLKRQSAYERSLGGQQGSPKHGPHGGPPKGLPREEPELRPRPPRPLESHLAINGSANRQSKSESDYSDGDNDSINSTSNSNDTINCSSESSSRDSLREQTLSKQTYHKETRNSWDSPAFSNDVIRKRHYRIGLNLFNKKPEKGIQYLIERGFVPDTPVGVAHFLLQRKGLSRQMIGEFLGNRQKQFNRDVLDCVVDEMDFSAMELDEALRKFQAHIRVQGEAQKVERLIEAFSQRYCVCNPGVVRQFRNPDTIFILAFAIILLNTDMYSPNVKPERKMKLEDFVKNLRGVDDGEDIPRETLIGIYERIRKRELKTNEDHVSQVQKVEKLIVGKKPIGSLHHGLGCVLSLPHRRLVCYCRLFEVPDPNKPQKLGLHQREIFLFNDLLVVTKIFQKKKNSVTYSFRQSFSLYGMQVLLFENQYYPNGIRLTSAVPGADIKVLINFNAPNPQDRKKFTDDLRESVAEVQEMEKHRIESELEKQKGVVRPSMSQCSSLKKESGNGTLSRACLDDSYASGEGLKRSALSSSLRDLSEAGKRGRRSSAGSLESNVEFQPFQPSQPPVLCS.

Residues 1–96 (MACRRRYLSS…STSVLRKQAE (96 aa)) form a disordered region. The span at 8-19 (LSSLETGSSLST) shows a compositional bias: low complexity. Polar residues predominate over residues 30–39 (SSETGTSLDS). S89, S105, and S107 each carry phosphoserine. Positions 134 to 163 (TRHAARTIQTAFRQYQMNKNFERLRSSMSE) constitute an IQ domain. Phosphoserine occurs at positions 180, 248, and 252. 3 disordered regions span residues 264-292 (SEEV…HRKL), 311-333 (LSPP…DLRL), and 348-516 (KEDK…DSPA). Positions 273–292 (ARARDTEPKPGLHGMDHRKL) are enriched in basic and acidic residues. Composition is skewed to basic and acidic residues over residues 365 to 375 (ERPEPRLRVEH) and 429 to 445 (LPRE…RPLE). The segment covering 470 to 488 (DSINSTSNSNDTINCSSES) has biased composition (low complexity). Phosphoserine occurs at positions 511 and 514. The 194-residue stretch at 516 to 709 (AFSNDVIRKR…IGIYERIRKR (194 aa)) folds into the SEC7 domain. The PH domain maps to 773 to 865 (HQREIFLFND…LRESVAEVQE (93 aa)). Residue S891 is modified to Phosphoserine. Y910 carries the phosphotyrosine modification. Positions 921–962 (LSSSLRDLSEAGKRGRRSSAGSLESNVEFQPFQPSQPPVLCS) are disordered. Phosphoserine is present on residues S923 and S924. Residues 939–948 (SAGSLESNVE) show a composition bias toward polar residues.

It belongs to the BRAG family. As to quaternary structure, interacts with ARF1 and ARF6. Interacts with GRIA2; the interaction is required for ARF6 activation.

The protein localises to the cytoplasm. Its subcellular location is the nucleus. It is found in the postsynaptic density. It localises to the cytoplasmic vesicle. The protein resides in the secretory vesicle. The protein localises to the synaptic vesicle. Functionally, guanine nucleotide exchange factor for ARF1 and ARF6. Guanine nucleotide exchange factor activity is enhanced by lipid binding. Accelerates GTP binding by ARFs of all three classes. Guanine nucleotide exchange protein for ARF6, mediating internalization of beta-1 integrin. Involved in neuronal development. In neurons, plays a role in the control of vesicle formation by endocytoc cargo. Upon long term depression, interacts with GRIA2 and mediates the activation of ARF6 to internalize synaptic AMPAR receptors. This is IQ motif and SEC7 domain-containing protein 1 from Rattus norvegicus (Rat).